The following is a 440-amino-acid chain: Probable pectate lyase 10 (440 aa).

Residues 1–28 form the signal peptide; that stretch reads MVIFSRSFLALSTTLIILALCINSSTMA. The interval 32-56 is disordered; that stretch reads EDLNSHSSSNSSTANKLPNDDGAWN. N-linked (GlcNAc...) asparagine glycosylation is found at Asn41 and Asn76. The Ca(2+) site is built by Asp238, Asp262, and Asp266. Arg318 is a catalytic residue.

The protein belongs to the polysaccharide lyase 1 family. The cofactor is Ca(2+).

The enzyme catalyses Eliminative cleavage of (1-&gt;4)-alpha-D-galacturonan to give oligosaccharides with 4-deoxy-alpha-D-galact-4-enuronosyl groups at their non-reducing ends.. The protein operates within glycan metabolism; pectin degradation; 2-dehydro-3-deoxy-D-gluconate from pectin: step 2/5. The protein is Probable pectate lyase 10 of Arabidopsis thaliana (Mouse-ear cress).